The sequence spans 471 residues: 7-dehydrocholesterol reductase (471 aa).

Residues 1 to 23 (MASKSQHNAPKVKSPNGKAGSQG) form a disordered region. Ser14 is modified (phosphoserine). A run of 8 helical transmembrane segments spans residues 36-56 (LASI…FIMA), 95-115 (LYAL…DFCH), 144-164 (LQAW…LSWF), 173-193 (WIPL…FAMI), 233-253 (LFFN…SFAA), 262-282 (VTNS…DFFW), 302-322 (LGWG…LYLV), and 327-347 (QLST…YYIF). Residues Lys354, Arg358, Leu391, Trp396, and 403–404 (NY) each bind NADP(+). The chain crosses the membrane as a helical span at residues 416 to 436 (LACGGGHLLPYFYIIYMTILL). Residues Asp443, 447–451 (CANKY), and Tyr458 each bind NADP(+).

It belongs to the ERG4/ERG24 family. In terms of assembly, interacts with DHCR24; this interaction regulates DHCR7 activity. Interacts with TMEM147.

The protein resides in the endoplasmic reticulum membrane. The enzyme catalyses cholesterol + NADP(+) = 7-dehydrocholesterol + NADPH + H(+). The catalysed reaction is 7-dehydrodesmosterol + NADPH + H(+) = desmosterol + NADP(+). It carries out the reaction 5,6alpha-epoxy-5alpha-cholestan-3beta-ol + H2O = 5alpha-cholestane-3beta,5,6beta-triol. It catalyses the reaction 5,6beta-epoxy-5beta-cholestan-3beta-ol + H2O = 5alpha-cholestane-3beta,5,6beta-triol. It functions in the pathway steroid biosynthesis; cholesterol biosynthesis. Functionally, oxidoreductase that catalyzes the last step of the cholesterol synthesis pathway, which transforms cholesta-5,7-dien-3beta-ol (7-dehydrocholesterol,7-DHC) into cholesterol by reducing the C7-C8 double bond of its sterol core. Can also metabolize cholesta-5,7,24-trien-3beta-ol (7-dehydrodemosterol, 7-DHD) to desmosterol, which is then metabolized by the Delta(24)-sterol reductase (DHCR24) to cholesterol. Modulates ferroptosis (a form of regulated cell death driven by iron-dependent lipid peroxidation) through the metabolic breakdown of the anti-ferroptotic metabolites 7-DHC and 7-DHD which, when accumulated, divert the propagation of peroxyl radical-mediated damage from phospholipid components to its sterol core, protecting plasma and mitochondrial membranes from phospholipid autoxidation. Its function is as follows. Component of the microsomal antiestrogen binding site (AEBS), a multiproteic complex at the ER membrane that consists of an association between cholestenol Delta-isomerase/EBP and DHCR7. This complex is responsible for cholesterol-5,6-epoxide hydrolase (ChEH) activity, which consists in the hydration of cholesterol-5,6-epoxides (5,6-EC) into cholestane-3beta,5alpha,6beta-triol (CT). The precise role of each component of this complex has not been described yet. This Mus musculus (Mouse) protein is 7-dehydrocholesterol reductase (Dhcr7).